A 407-amino-acid polypeptide reads, in one-letter code: Odorant receptor 67a (407 aa).

Residues 1-40 are Cytoplasmic-facing; the sequence is MDNVAEMPEEKYVEVDDFLRLAVKFYNTLGIDPYETGRKR. A helical transmembrane segment spans residues 41–61; the sequence is TIWFQIYFALNMFNMVFSFYA. Residues 62-79 are Extracellular-facing; the sequence is EVATLVDRLRDNENFLES. Residues 80–100 form a helical membrane-spanning segment; sequence CILLSYVSFVVMGLSKIGAVM. Over 101 to 144 the chain is Cytoplasmic; sequence KKKPKMTALVRQLETCFPSPSAKVQEEYAVKSWLKRCHIYTKGF. Residues 145–165 traverse the membrane as a helical segment; the sequence is GGLFMIMYFAHALIPLFIYFI. At 166–208 the chain is on the extracellular side; that stretch reads QRVLLHYPDAKQIMPFYQLEPWEFRDSWLFYPSYFHQSSAGYT. The chain crosses the membrane as a helical span at residues 209-229; that stretch reads ATCGSIAGDLMIFAVVLQVIM. Over 230 to 278 the chain is Cytoplasmic; it reads HYERLAKVLREFKIQAHNAPNGAKEDIRKLQSLVANHIDILRLTDLMNE. Residues 279-300 form a helical membrane-spanning segment; that stretch reads VFGIPLLLNFIASALLVCLVGV. Topologically, residues 301-314 are extracellular; it reads QLTIALSPEYFCKQ. Residues 315–331 form a helical membrane-spanning segment; sequence MLFLISVLLEVYLLCSF. Topologically, residues 332 to 378 are cytoplasmic; sequence SQRLIDASENVGHAAYDMDWLGSDKRFKKILIFISMRSQKPVCLKAT. Residues 379-401 traverse the membrane as a helical segment; that stretch reads VVLDLSMPTMSIFLGMSYKFFCA. Residues 402 to 407 are Extracellular-facing; that stretch reads VRTMYQ.

The protein belongs to the insect chemoreceptor superfamily. Heteromeric odorant receptor channel (TC 1.A.69) family. Or49a subfamily. As to quaternary structure, interacts with Orco. Complexes exist early in the endomembrane system in olfactory sensory neurons (OSNs), coupling these complexes to the conserved ciliary trafficking pathway. In terms of tissue distribution, expressed in olfactory sensory neurons in the antenna.

The protein localises to the cell membrane. Its function is as follows. Odorant receptor which mediates acceptance or avoidance behavior, depending on its substrates. The odorant receptor repertoire encodes a large collection of odor stimuli that vary widely in identity, intensity, and duration. Forms a complex with Orco to form odorant-sensing units, providing sensitive and prolonged odorant signaling and calcium permeability. Involved in the behavioral responses to benzaldehyde and acetophenone. In Drosophila melanogaster (Fruit fly), this protein is Odorant receptor 67a (Or67a).